The following is a 209-amino-acid chain: Imidazole glycerol phosphate synthase subunit HisH (209 aa).

The region spanning 3 to 209 (SVAVIDYGMG…ANFLTWNGVS (207 aa)) is the Glutamine amidotransferase type-1 domain. The Nucleophile role is filled by cysteine 82. Active-site residues include histidine 187 and glutamate 189.

In terms of assembly, heterodimer of HisH and HisF.

It localises to the cytoplasm. It carries out the reaction 5-[(5-phospho-1-deoxy-D-ribulos-1-ylimino)methylamino]-1-(5-phospho-beta-D-ribosyl)imidazole-4-carboxamide + L-glutamine = D-erythro-1-(imidazol-4-yl)glycerol 3-phosphate + 5-amino-1-(5-phospho-beta-D-ribosyl)imidazole-4-carboxamide + L-glutamate + H(+). The catalysed reaction is L-glutamine + H2O = L-glutamate + NH4(+). It participates in amino-acid biosynthesis; L-histidine biosynthesis; L-histidine from 5-phospho-alpha-D-ribose 1-diphosphate: step 5/9. IGPS catalyzes the conversion of PRFAR and glutamine to IGP, AICAR and glutamate. The HisH subunit catalyzes the hydrolysis of glutamine to glutamate and ammonia as part of the synthesis of IGP and AICAR. The resulting ammonia molecule is channeled to the active site of HisF. The polypeptide is Imidazole glycerol phosphate synthase subunit HisH (Nitrosococcus oceani (strain ATCC 19707 / BCRC 17464 / JCM 30415 / NCIMB 11848 / C-107)).